The sequence spans 508 residues: Polyamine oxidase FMS1 (508 aa).

It belongs to the flavin monoamine oxidase family. FAD is required as a cofactor.

It catalyses the reaction spermine + O2 + H2O = 3-aminopropanal + spermidine + H2O2. The catalysed reaction is spermidine + O2 + H2O = 3-aminopropanal + putrescine + H2O2. It carries out the reaction N(1)-acetylspermine + O2 + H2O = 3-acetamidopropanal + spermidine + H2O2. The enzyme catalyses N(1)-acetylspermidine + O2 + H2O = 3-acetamidopropanal + putrescine + H2O2. It catalyses the reaction N(8)-acetylspermidine + O2 + H2O = 4-acetamidobutanal + propane-1,3-diamine + H2O2. Involved in the production of beta-alanine, a precursor of pantothenic acid. Multicopy suppressor of fenpropimorph resistance. In Saccharomyces cerevisiae (strain ATCC 204508 / S288c) (Baker's yeast), this protein is Polyamine oxidase FMS1 (FMS1).